Reading from the N-terminus, the 807-residue chain is Glycerol-3-phosphate acyltransferase (807 aa).

The short motif at 308–313 is the HXXXXD motif element; sequence CHRSHM.

Belongs to the GPAT/DAPAT family.

It localises to the cell inner membrane. The enzyme catalyses sn-glycerol 3-phosphate + an acyl-CoA = a 1-acyl-sn-glycero-3-phosphate + CoA. It functions in the pathway phospholipid metabolism; CDP-diacylglycerol biosynthesis; CDP-diacylglycerol from sn-glycerol 3-phosphate: step 1/3. The chain is Glycerol-3-phosphate acyltransferase from Shewanella baltica (strain OS195).